Reading from the N-terminus, the 485-residue chain is ATP-dependent rRNA helicase RRP3 (485 aa).

The segment covering 1–10 (MPVLKKRKLA) has biased composition (basic residues). The segment at 1–55 (MPVLKKRKLAHTAQPDPIVSDLESSSSEASQQSHDEQLTAANEQDDESPQVQREE) is disordered. Positions 20 to 32 (SDLESSSSEASQQ) are enriched in low complexity. A Q motif motif is present at residues 59–87 (KSFKDLGIIDSLCEACEALGYKSPTPIQA). The Helicase ATP-binding domain occupies 90–261 (IPLALQGRDL…RASLSNPLRV (172 aa)). Position 103–110 (103–110 (AETGSGKT)) interacts with ATP. The DEAD box signature appears at 209–212 (DEAD). The Helicase C-terminal domain maps to 285 to 433 (YKDIYLVYLL…EYKVEKEEVM (149 aa)). Positions 449–458 (EMKDLHEKRG) are enriched in basic and acidic residues. The interval 449-485 (EMKDLHEKRGSRGATLKGRRPAKGAKRGRDEMDREEG) is disordered. Residues 465 to 474 (KGRRPAKGAK) are compositionally biased toward basic residues. A compositionally biased stretch (basic and acidic residues) spans 475–485 (RGRDEMDREEG).

Belongs to the DEAD box helicase family. DDX47/RRP3 subfamily. In terms of assembly, interacts with the SSU processome.

Its subcellular location is the nucleus. The catalysed reaction is ATP + H2O = ADP + phosphate + H(+). In terms of biological role, ATP-dependent rRNA helicase required for pre-ribosomal RNA processing. Involved in the maturation of the 35S-pre-rRNA and to its cleavage to mature 18S rRNA. The protein is ATP-dependent rRNA helicase RRP3 of Ajellomyces capsulatus (strain NAm1 / WU24) (Darling's disease fungus).